Reading from the N-terminus, the 662-residue chain is Methionine--tRNA ligase (662 aa).

A 'HIGH' region motif is present at residues 13-23; sequence PYTNGPCHLGH. Positions 144, 147, 156, and 160 each coordinate Zn(2+). The 'KMSKS' region motif lies at 326–330; the sequence is KFSKS. Position 329 (lysine 329) interacts with ATP. Residues 564 to 662 enclose the tRNA-binding domain; that stretch reads DFSKVEIKTG…KPVEPGTKIR (99 aa).

This sequence belongs to the class-I aminoacyl-tRNA synthetase family. MetG type 1 subfamily. As to quaternary structure, homodimer. The cofactor is Zn(2+).

Its subcellular location is the cytoplasm. The enzyme catalyses tRNA(Met) + L-methionine + ATP = L-methionyl-tRNA(Met) + AMP + diphosphate. In terms of biological role, is required not only for elongation of protein synthesis but also for the initiation of all mRNA translation through initiator tRNA(fMet) aminoacylation. This chain is Methionine--tRNA ligase, found in Methanoregula boonei (strain DSM 21154 / JCM 14090 / 6A8).